We begin with the raw amino-acid sequence, 138 residues long: Basic phospholipase A2 ammodytoxin B (138 aa).

Positions 1–16 are cleaved as a signal peptide; it reads MRTLWIVAVCLIGVEG. Cystine bridges form between C42/C131, C44/C60, C59/C111, C65/C138, C66/C104, C73/C97, and C91/C102. Positions 43, 45, and 47 each coordinate Ca(2+). H63 is an active-site residue. D64 contributes to the Ca(2+) binding site. The active site involves D105.

This sequence belongs to the phospholipase A2 family. Group II subfamily. D49 sub-subfamily. In terms of assembly, monomer. Binds to calmodulin, coagulation factor X (F10), M-type PLA2 receptor (R-180), 14-3-3 proteins gamma (YWHAG) and epsilon (YWHAE), and R25, a mitochondrial membrane protein. The cofactor is Ca(2+). As to expression, expressed by the venom gland.

The protein localises to the secreted. It is found in the host cytoplasm. The protein resides in the host cytosol. The catalysed reaction is a 1,2-diacyl-sn-glycero-3-phosphocholine + H2O = a 1-acyl-sn-glycero-3-phosphocholine + a fatty acid + H(+). Functionally, snake venom phospholipase A2 (PLA2) that acts as a presynaptic neurotoxin, an inhibitor of blood coagulation, and has been found to bind with high affinity to intracellular proteins. The response of indirectly stimulated neuromuscular preparations to ammodytoxin (Atx) is triphasic. The first phase, the transient inhibition of the acetylcholine (ACh) release, starts soon after the addition of Atx and lasts for several minutes. This phase is probably independent of Atx enzymatic activity. The effect may be due to the specific binding of the toxin to presynaptic receptors. These receptors, called N-type receptors, are still unidentified. It is noteworthy that a neuronal isoform of the M-type PLA2 receptor (R180) has been identified as a high-affinity receptor for Atx in neuronal plasma membranes. It was demonstrated however that this receptor is not essential for expression of neurotoxicity by Atx. The second phase corresponds to an augmentation of neurotransmitter release. A peak is reached 10-20 minutes after exposure of the preparation to Atx and is followed by a gradual reduction. In this phase, the enzymatic activity of Atx of the mammalian is not significant. It is speculated that the increased release of neurotransmitter in this phase is induced by the interference of Atx with voltage-gated potassium channels. Measurements of ionic currents showed however that voltage-gated potassium channels are not affected by Atx. The third phase of the response of neuromuscular preparations to Atx, which corresponds to a complete and irreversible paralysis, is clearly dependent on the hydrolytic activity of the toxin. In addition to its presynaptic neurotoxicity, Atx shows an anticoagulant activity by binding with high affinity to activated coagulation factor X (F10) thus inhibiting the formation of the prothrombinase complex (FX/FV) and its activity (IC(50) is 82 nM). Surprisingly, Atx was discovered to bind intracellular proteins such as calmodulin (CaM), 14-3-3 proteins gamma (YWHAG) and epsilon (YWHAE) (by similarity with AtxC), as well as R25 (by similarity with AtxC), a mitochondrial integral membrane protein found in cerebral cortex. These findings raised a doubt about the dogma of the exclusively extracellular action of PLA2s, defended by the potential instability of these molecules in the reducing environment of the eukaryotic cytosol coupled with their possible inability to act as enzymes in this cellular compartment, due to too low concentration of calcium ions. This hypothesis was challenged efficiently by demonstrating the internalization of AtxA into a culture cells, but still remains to be directly demonstrated in vivo. PLA2 catalyzes the calcium-dependent hydrolysis of the 2-acyl groups in 3-sn-phosphoglycerides. The chain is Basic phospholipase A2 ammodytoxin B from Vipera ammodytes ammodytes (Western sand viper).